Consider the following 208-residue polypeptide: Uracil phosphoribosyltransferase (208 aa).

Residues Arg-78, Arg-103, and 130–138 (DPMLATGGS) contribute to the 5-phospho-alpha-D-ribose 1-diphosphate site. Residues Ile-193 and 198 to 200 (GDA) contribute to the uracil site. Residue Asp-199 participates in 5-phospho-alpha-D-ribose 1-diphosphate binding.

The protein belongs to the UPRTase family. The cofactor is Mg(2+).

The enzyme catalyses UMP + diphosphate = 5-phospho-alpha-D-ribose 1-diphosphate + uracil. It participates in pyrimidine metabolism; UMP biosynthesis via salvage pathway; UMP from uracil: step 1/1. Its activity is regulated as follows. Allosterically activated by GTP. Functionally, catalyzes the conversion of uracil and 5-phospho-alpha-D-ribose 1-diphosphate (PRPP) to UMP and diphosphate. This chain is Uracil phosphoribosyltransferase, found in Thermus thermophilus (strain ATCC 27634 / DSM 579 / HB8).